The chain runs to 146 residues: Ribosome-binding factor A (146 aa).

Residues 113–146 (IRDEREAQEPAQDPAQDSSQDASVEASDAPDKAE) are disordered.

Belongs to the RbfA family. As to quaternary structure, monomer. Binds 30S ribosomal subunits, but not 50S ribosomal subunits or 70S ribosomes.

The protein resides in the cytoplasm. Functionally, one of several proteins that assist in the late maturation steps of the functional core of the 30S ribosomal subunit. Associates with free 30S ribosomal subunits (but not with 30S subunits that are part of 70S ribosomes or polysomes). Required for efficient processing of 16S rRNA. May interact with the 5'-terminal helix region of 16S rRNA. The protein is Ribosome-binding factor A of Gemmatimonas aurantiaca (strain DSM 14586 / JCM 11422 / NBRC 100505 / T-27).